We begin with the raw amino-acid sequence, 394 residues long: Phosphopentomutase (394 aa).

6 residues coordinate Mn(2+): D15, D288, H293, D329, H330, and H341.

The protein belongs to the phosphopentomutase family. Mn(2+) serves as cofactor.

Its subcellular location is the cytoplasm. The catalysed reaction is 2-deoxy-alpha-D-ribose 1-phosphate = 2-deoxy-D-ribose 5-phosphate. It carries out the reaction alpha-D-ribose 1-phosphate = D-ribose 5-phosphate. The protein operates within carbohydrate degradation; 2-deoxy-D-ribose 1-phosphate degradation; D-glyceraldehyde 3-phosphate and acetaldehyde from 2-deoxy-alpha-D-ribose 1-phosphate: step 1/2. In terms of biological role, isomerase that catalyzes the conversion of deoxy-ribose 1-phosphate (dRib-1-P) and ribose 1-phosphate (Rib-1-P) to deoxy-ribose 5-phosphate (dRib-5-P) and ribose 5-phosphate (Rib-5-P), respectively. This is Phosphopentomutase (drm) from Bacillus subtilis (strain 168).